The chain runs to 172 residues: MASNFKKANMASSSQRKRMSPKPELTEEQKQEIREAFDLFDADGTGTIDVKELKVAMRALGFEPKKEEIKKMISEIDKEGTGKMNFGDFLTVMTQKMSEKDTKEEILKAFKLFDDDETGKISFKNLKRVAKELGENLTDEELQEMIDEADRDGDGEVSEQEFLRIMKKTSLY.

Residues 1-30 (MASNFKKANMASSSQRKRMSPKPELTEEQK) form a disordered region. The residue at position 2 (alanine 2) is an N-acetylalanine. The tract at residues 2 to 25 (ASNFKKANMASSSQRKRMSPKPEL) is required for self-assembly. Serine 20 bears the Phosphoserine mark. Residue lysine 22 forms a Glycyl lysine isopeptide (Lys-Gly) (interchain with G-Cter in SUMO2) linkage. Threonine 26 is modified (phosphothreonine). EF-hand domains are found at residues 28-63 (EQKQEIREAFDLFDADGTGTIDVKELKVAMRALGFE), 64-99 (PKKEEIKKMISEIDKEGTGKMNFGDFLTVMTQKMSE), 101-136 (DTKEEILKAFKLFDDDETGKISFKNLKRVAKELGEN), and 137-172 (LTDEELQEMIDEADRDGDGEVSEQEFLRIMKKTSLY). Ca(2+) contacts are provided by aspartate 41, aspartate 43, threonine 45, threonine 47, and glutamate 52. Residues aspartate 150, aspartate 152, aspartate 154, glutamate 156, and glutamate 161 each contribute to the Ca(2+) site.

The protein belongs to the centrin family. In terms of assembly, monomer. Homooligomer. Interacts with SFI1. Interacts with CCP110. Component of the XPC complex composed of XPC, RAD23B and CETN2. Component of the nuclear pore complex (NPC)-associated TREX-2 complex (transcription and export complex 2), composed of at least GANP, 2 copies of ENY2, PCID2, SEM1/DSS1, and either centrin CETN2 or centrin CETN3. The TREX-2 complex also associates with ALYREF/ALY and with the nucleoporin NUP153. Interacts with USP49. Forms a microtubule-associated complex with POC5, POC1B and FAM161A. Interacts with CCDC15.

The protein localises to the cytoplasm. It localises to the cytoskeleton. Its subcellular location is the microtubule organizing center. The protein resides in the centrosome. It is found in the centriole. The protein localises to the nucleus envelope. It localises to the nucleus. Its subcellular location is the nuclear pore complex. Plays a fundamental role in microtubule organizing center structure and function. Required for centriole duplication and correct spindle formation. Has a role in regulating cytokinesis and genome stability via cooperation with CALM1 and CCP110. Its function is as follows. Involved in global genome nucleotide excision repair (GG-NER) by acting as component of the XPC complex. Cooperatively with RAD23B appears to stabilize XPC. In vitro, stimulates DNA binding of the XPC:RAD23B dimer. In terms of biological role, the XPC complex is proposed to represent the first factor bound at the sites of DNA damage and together with other core recognition factors, XPA, RPA and the TFIIH complex, is part of the pre-incision (or initial recognition) complex. The XPC complex recognizes a wide spectrum of damaged DNA characterized by distortions of the DNA helix such as single-stranded loops, mismatched bubbles or single-stranded overhangs. The orientation of XPC complex binding appears to be crucial for inducing a productive NER. XPC complex is proposed to recognize and to interact with unpaired bases on the undamaged DNA strand which is followed by recruitment of the TFIIH complex and subsequent scanning for lesions in the opposite strand in a 5'-to-3' direction by the NER machinery. Cyclobutane pyrimidine dimers (CPDs) which are formed upon UV-induced DNA damage esacpe detection by the XPC complex due to a low degree of structural perurbation. Instead they are detected by the UV-DDB complex which in turn recruits and cooperates with the XPC complex in the respective DNA repair. Functionally, as a component of the TREX-2 complex, involved in the export of mRNAs to the cytoplasm through the nuclear pores. This chain is Centrin-2 (CETN2), found in Homo sapiens (Human).